The sequence spans 226 residues: MASGGGYGDANAKIDYVFKVVLIGDSAVGKSQILARFARNEFSLDSKSTIGVEFQTRTLVIDHKTVKAQIWDTAGQERYRAVTSAYYRGAVGAMLVYDITKRQTFDHIPRWLEELRNHADKNIVIILIGNKCDLVNQRDVPTEDAKEFAEKEGLFFLETSALEATNVESAFTTVLTEIYNIVNKKSLAADESQGNGNSASLSGQKIIIPGPAQEIPAKRNMCCQAS.

Residues 24–32 (GDSAVGKSQ), 43–49 (SLDSKST), 72–76 (DTAGQ), 130–133 (NKCD), and 160–162 (SAL) each bind GTP. Positions 46 to 54 (SKSTIGVEF) match the Effector region motif. Residues Cys222 and Cys223 are each lipidated (S-geranylgeranyl cysteine). Cys223 carries the post-translational modification Cysteine methyl ester. A propeptide spans 224 to 226 (QAS) (removed in mature form).

This sequence belongs to the small GTPase superfamily. Rab family.

It is found in the cell membrane. In Lotus japonicus (Lotus corniculatus var. japonicus), this protein is Ras-related protein Rab11A (RAB11A).